Here is a 717-residue protein sequence, read N- to C-terminus: Serine/threonine-protein kinase STE11 (717 aa).

Residues 20 to 84 enclose the SAM domain; that stretch reads NDLPFVQLFL…LRKSKSFQRD (65 aa). Ser323 is subject to Phosphoserine. Residues 415 to 712 form the Protein kinase domain; sequence WLKGACIGSG…ALELLQHPWL (298 aa). Residues 421 to 429 and Lys444 each bind ATP; that span reads IGSGSFGSV. The segment covering 452-466 has biased composition (polar residues); the sequence is NIGVPTDNNKQANSD. Positions 452-481 are disordered; the sequence is NIGVPTDNNKQANSDENNEQEEQQEKIEDV. At Ser465 the chain carries Phosphoserine. Asp579 acts as the Proton acceptor in catalysis.

This sequence belongs to the protein kinase superfamily. STE Ser/Thr protein kinase family. MAP kinase kinase kinase subfamily. As to quaternary structure, homodimer. Interacts (via SAM domain) with STE50 (via SAM domain). Interacts with PBS2 and SHO1.

The enzyme catalyses L-seryl-[protein] + ATP = O-phospho-L-seryl-[protein] + ADP + H(+). It catalyses the reaction L-threonyl-[protein] + ATP = O-phospho-L-threonyl-[protein] + ADP + H(+). In terms of biological role, serine/threonine protein kinase required for cell-type-specific transcription and signal transduction in yeast. It is thought that it phosphorylates the STE7 protein kinase which itself, phosphorylates the FUS3 and or KSS1 kinases. This is Serine/threonine-protein kinase STE11 (STE11) from Saccharomyces cerevisiae (strain ATCC 204508 / S288c) (Baker's yeast).